Reading from the N-terminus, the 408-residue chain is Histidine--tRNA ligase (408 aa).

It belongs to the class-II aminoacyl-tRNA synthetase family. As to quaternary structure, homodimer.

The protein resides in the cytoplasm. The catalysed reaction is tRNA(His) + L-histidine + ATP = L-histidyl-tRNA(His) + AMP + diphosphate + H(+). The protein is Histidine--tRNA ligase of Campylobacter jejuni subsp. doylei (strain ATCC BAA-1458 / RM4099 / 269.97).